Reading from the N-terminus, the 263-residue chain is Shikimate dehydrogenase (NADP(+)) (263 aa).

Shikimate-binding positions include 14–16 (SLS) and T60. K64 (proton acceptor) is an active-site residue. 2 residues coordinate shikimate: N85 and D100. NADP(+) contacts are provided by residues 123–127 (GAGGA), 146–151 (NRTPQR), and L205. Y207 provides a ligand contact to shikimate. G228 is a binding site for NADP(+).

Belongs to the shikimate dehydrogenase family. As to quaternary structure, homodimer.

It carries out the reaction shikimate + NADP(+) = 3-dehydroshikimate + NADPH + H(+). It participates in metabolic intermediate biosynthesis; chorismate biosynthesis; chorismate from D-erythrose 4-phosphate and phosphoenolpyruvate: step 4/7. Functionally, involved in the biosynthesis of the chorismate, which leads to the biosynthesis of aromatic amino acids. Catalyzes the reversible NADPH linked reduction of 3-dehydroshikimate (DHSA) to yield shikimate (SA). The protein is Shikimate dehydrogenase (NADP(+)) of Thermus thermophilus (strain ATCC BAA-163 / DSM 7039 / HB27).